A 577-amino-acid chain; its full sequence is Protein NUCLEOLAR COMPLEX ASSOCIATED 4 (577 aa).

Residues 230–263 (PEKQAEKSQHEMWSGSDESISEKPTDKKKKTEKG) form a disordered region. 3 helical membrane passes run 329–349 (IGGV…TQHG), 350–370 (LEYP…VFVA), and 404–424 (LSLS…YNLL).

Belongs to the CBF/MAK21 family. In terms of assembly, component of the ribosomal small subunit (SSU) processome composed of at least 40 protein subunits and snoRNA U3. Mostly expressed in flowers and stems and at lower levels in roots, hypocotyls, siliques, leaves and seeds.

The protein resides in the nucleus membrane. It is found in the nucleus. The protein localises to the nucleolus. Functionally, essential protein required during embryogenesis. Involved in nucleolar processing of ribosomal RNA (rRNA) 40S and 90S ribosomal subunits and ribosome assembly; early in ribosome biogenesis, especially required during the maturation of 5.8S rRNA. Has a role in the nuclear export of 40S pre-ribosomal subunit to the cytoplasm. This Arabidopsis thaliana (Mouse-ear cress) protein is Protein NUCLEOLAR COMPLEX ASSOCIATED 4.